The chain runs to 240 residues: UDP-2,3-diacylglucosamine hydrolase (240 aa).

Residues Asp-8, His-10, Asp-41, Asn-79, and His-114 each coordinate Mn(2+). Asn-79–Arg-80 is a binding site for substrate. Substrate-binding residues include Asp-122, Ser-160, Asn-164, Lys-167, and His-195. 2 residues coordinate Mn(2+): His-195 and His-197.

This sequence belongs to the LpxH family. The cofactor is Mn(2+).

The protein resides in the cell inner membrane. It carries out the reaction UDP-2-N,3-O-bis[(3R)-3-hydroxytetradecanoyl]-alpha-D-glucosamine + H2O = 2-N,3-O-bis[(3R)-3-hydroxytetradecanoyl]-alpha-D-glucosaminyl 1-phosphate + UMP + 2 H(+). Its pathway is glycolipid biosynthesis; lipid IV(A) biosynthesis; lipid IV(A) from (3R)-3-hydroxytetradecanoyl-[acyl-carrier-protein] and UDP-N-acetyl-alpha-D-glucosamine: step 4/6. Hydrolyzes the pyrophosphate bond of UDP-2,3-diacylglucosamine to yield 2,3-diacylglucosamine 1-phosphate (lipid X) and UMP by catalyzing the attack of water at the alpha-P atom. Involved in the biosynthesis of lipid A, a phosphorylated glycolipid that anchors the lipopolysaccharide to the outer membrane of the cell. This Cellvibrio japonicus (strain Ueda107) (Pseudomonas fluorescens subsp. cellulosa) protein is UDP-2,3-diacylglucosamine hydrolase.